Reading from the N-terminus, the 126-residue chain is Aspartate 1-decarboxylase (126 aa).

Ser-25 (schiff-base intermediate with substrate; via pyruvic acid) is an active-site residue. Ser-25 carries the pyruvic acid (Ser) modification. Thr-57 provides a ligand contact to substrate. Tyr-58 serves as the catalytic Proton donor. Substrate is bound at residue 73-75 (GAA).

It belongs to the PanD family. In terms of assembly, heterooctamer of four alpha and four beta subunits. The cofactor is pyruvate. In terms of processing, is synthesized initially as an inactive proenzyme, which is activated by self-cleavage at a specific serine bond to produce a beta-subunit with a hydroxyl group at its C-terminus and an alpha-subunit with a pyruvoyl group at its N-terminus.

The protein localises to the cytoplasm. The enzyme catalyses L-aspartate + H(+) = beta-alanine + CO2. Its pathway is cofactor biosynthesis; (R)-pantothenate biosynthesis; beta-alanine from L-aspartate: step 1/1. Its function is as follows. Catalyzes the pyruvoyl-dependent decarboxylation of aspartate to produce beta-alanine. The chain is Aspartate 1-decarboxylase from Alkalilimnicola ehrlichii (strain ATCC BAA-1101 / DSM 17681 / MLHE-1).